Consider the following 235-residue polypeptide: MALRTLASKKVLSFPFGGAGRPLAAAASARGVTTVTLPDLSYDFGALEPAISGEIMRLHHQKHHATYVANYNKALEQLETAVSKGDASAVVQLQAAIKFNGGGHVNHSIFWKNLKPISEGGGEPPHGKLGWAIDEDFGSFEALVKKMNAEGAALQGSGWVWLALDKEAKKVSVETTANQDPLVTKGASLVPLLGIDVWEHAYYLQYKNVRPDYLNNIWKVMNWKYAGEVYENVLA.

Residues 1–31 (MALRTLASKKVLSFPFGGAGRPLAAAASARG) constitute a mitochondrion transit peptide. Positions 59, 107, 196, and 200 each coordinate Mn(2+).

Belongs to the iron/manganese superoxide dismutase family. As to quaternary structure, homotetramer. Mn(2+) is required as a cofactor.

The protein resides in the mitochondrion matrix. It carries out the reaction 2 superoxide + 2 H(+) = H2O2 + O2. In terms of biological role, destroys superoxide anion radicals which are normally produced within the cells and which are toxic to biological systems. In Zea mays (Maize), this protein is Superoxide dismutase [Mn] 3.1, mitochondrial (SODA.4).